Here is a 195-residue protein sequence, read N- to C-terminus: dITP/XTP pyrophosphatase (195 aa).

9–14 (TGNKGK) lines the substrate pocket. 2 residues coordinate Mg(2+): Glu-41 and Asp-70. Asp-70 acts as the Proton acceptor in catalysis. Substrate contacts are provided by residues Ser-71, 155–158 (FGYD), Lys-178, and 183–184 (HR).

The protein belongs to the HAM1 NTPase family. Homodimer. Mg(2+) is required as a cofactor.

It carries out the reaction XTP + H2O = XMP + diphosphate + H(+). The enzyme catalyses dITP + H2O = dIMP + diphosphate + H(+). It catalyses the reaction ITP + H2O = IMP + diphosphate + H(+). Pyrophosphatase that catalyzes the hydrolysis of nucleoside triphosphates to their monophosphate derivatives, with a high preference for the non-canonical purine nucleotides XTP (xanthosine triphosphate), dITP (deoxyinosine triphosphate) and ITP. Seems to function as a house-cleaning enzyme that removes non-canonical purine nucleotides from the nucleotide pool, thus preventing their incorporation into DNA/RNA and avoiding chromosomal lesions. In Haemophilus influenzae (strain ATCC 51907 / DSM 11121 / KW20 / Rd), this protein is dITP/XTP pyrophosphatase.